A 162-amino-acid polypeptide reads, in one-letter code: Transcriptional repressor NrdR (162 aa).

The segment at 1–21 (MNCPDCGDEQTRVIDTETSAD) is disordered. A zinc finger spans residues 3-34 (CPDCGDEQTRVIDTETSADGTSVRRRRECQRC). The ATP-cone domain occupies 49 to 139 (LQVKKRNGTI…VYKAFSEPQE (91 aa)).

The protein belongs to the NrdR family. Zn(2+) serves as cofactor.

Functionally, negatively regulates transcription of bacterial ribonucleotide reductase nrd genes and operons by binding to NrdR-boxes. This Halorubrum lacusprofundi (strain ATCC 49239 / DSM 5036 / JCM 8891 / ACAM 34) protein is Transcriptional repressor NrdR.